The following is a 382-amino-acid chain: G2/mitotic-specific cyclin-B2 (382 aa).

Residues 1 to 12 are compositionally biased toward polar residues; sequence MSSVEAVTQQQL. Residues 1–78 form a disordered region; the sequence is MSSVEAVTQQ…HTSAGDPAPI (78 aa). Residues 38 to 47 are compositionally biased toward low complexity; the sequence is NRNAAAAANR.

This sequence belongs to the cyclin family. Cyclin AB subfamily. As to quaternary structure, interacts with the CDK1 protein kinase to form a serine/threonine kinase holoenzyme complex also known as maturation promoting factor (MPF). The cyclin subunit imparts substrate specificity to the complex.

Essential for the control of the cell cycle at the G2/M (mitosis) transition. This chain is G2/mitotic-specific cyclin-B2 (ccnb2), found in Oryzias javanicus (Javanese ricefish).